We begin with the raw amino-acid sequence, 372 residues long: NAD(P)H-quinone oxidoreductase subunit 1 (372 aa).

8 helical membrane passes run 27 to 47 (VLWMPLPMLLMIIAATVGVLV), 97 to 117 (FLFTIGPALVVIPVFLSYLIV), 128 to 148 (VGAGVFLWIALSSIQPIGLLM), 176 to 196 (LALAVLAVVMMSNSLSTIDIV), 204 to 224 (ILGWNIWRQPVGFIIFWIAAL), 254 to 274 (FALFYVGSYVNLILSALLVSI), 308 to 328 (ALGITMTVLKAYLLVFTAILL), and 347 to 367 (FLLPISLVNLLVTAALKLTFP).

Belongs to the complex I subunit 1 family. NDH-1 is composed of at least 11 different subunits.

The protein resides in the cellular thylakoid membrane. It catalyses the reaction a plastoquinone + NADH + (n+1) H(+)(in) = a plastoquinol + NAD(+) + n H(+)(out). It carries out the reaction a plastoquinone + NADPH + (n+1) H(+)(in) = a plastoquinol + NADP(+) + n H(+)(out). NDH-1 shuttles electrons from an unknown electron donor, via FMN and iron-sulfur (Fe-S) centers, to quinones in the respiratory and/or the photosynthetic chain. The immediate electron acceptor for the enzyme in this species is believed to be plastoquinone. Couples the redox reaction to proton translocation, and thus conserves the redox energy in a proton gradient. This Synechococcus elongatus (strain ATCC 33912 / PCC 7942 / FACHB-805) (Anacystis nidulans R2) protein is NAD(P)H-quinone oxidoreductase subunit 1.